Here is a 102-residue protein sequence, read N- to C-terminus: uncharacterized protein (102 aa).

A helical membrane pass occupies residues 36–55 (IISLLAIFIKMCLWLWKQFL).

It is found in the membrane. This is an uncharacterized protein from Homo sapiens (Human).